Consider the following 257-residue polypeptide: Myosin-8 (257 aa).

Residues 1-257 are a coiled coil; it reads RAALQAEIEE…REVHTKISAE (257 aa). Phosphoserine is present on residues Ser-33, Ser-45, and Ser-58.

As to quaternary structure, muscle myosin is a hexameric protein that consists of 2 heavy chain subunits (MHC), 2 alkali light chain subunits (MLC) and 2 regulatory light chain subunits (MLC-2).

It is found in the cytoplasm. The protein localises to the myofibril. Its function is as follows. Muscle contraction. The chain is Myosin-8 (Myh8) from Rattus norvegicus (Rat).